The chain runs to 296 residues: HTH-type transcriptional regulator GltR (296 aa).

The HTH lysR-type domain maps to 1–58 (MNIQLLQVFLTTAREGSISKAALTLNYAQSNVTNKIQQLENDLQTKLFYRHSRGITLT). The segment at residues 18–37 (ISKAALTLNYAQSNVTNKIQ) is a DNA-binding region (H-T-H motif).

The protein belongs to the LysR transcriptional regulatory family.

Functionally, positive regulator of glutamate biosynthesis (gltAB genes). Negatively regulates its own expression. The sequence is that of HTH-type transcriptional regulator GltR (gltR) from Bacillus subtilis (strain 168).